Here is a 273-residue protein sequence, read N- to C-terminus: Ribosomal RNA small subunit methyltransferase A (273 aa).

The S-adenosyl-L-methionine site is built by Asn18, Leu20, Gly45, Glu66, Asp91, and Asn113.

This sequence belongs to the class I-like SAM-binding methyltransferase superfamily. rRNA adenine N(6)-methyltransferase family. RsmA subfamily.

It is found in the cytoplasm. The catalysed reaction is adenosine(1518)/adenosine(1519) in 16S rRNA + 4 S-adenosyl-L-methionine = N(6)-dimethyladenosine(1518)/N(6)-dimethyladenosine(1519) in 16S rRNA + 4 S-adenosyl-L-homocysteine + 4 H(+). In terms of biological role, specifically dimethylates two adjacent adenosines (A1518 and A1519) in the loop of a conserved hairpin near the 3'-end of 16S rRNA in the 30S particle. May play a critical role in biogenesis of 30S subunits. In Escherichia coli O1:K1 / APEC, this protein is Ribosomal RNA small subunit methyltransferase A.